The following is a 43-amino-acid chain: Neurotrophic factor BDNF (43 aa).

It belongs to the NGF-beta family.

The protein resides in the secreted. In terms of biological role, promotes the survival of neuronal populations that are all located either in the central nervous system or directly connected to it. This chain is Neurotrophic factor BDNF (BDNF), found in Macrovipera lebetinus (Levantine viper).